We begin with the raw amino-acid sequence, 286 residues long: uncharacterized protein (286 aa).

This is an uncharacterized protein from Acidianus sp. F28 (AFV-2).